The sequence spans 129 residues: Small ribosomal subunit protein uS11 (129 aa).

Belongs to the universal ribosomal protein uS11 family. In terms of assembly, part of the 30S ribosomal subunit. Interacts with proteins S7 and S18. Binds to IF-3.

Located on the platform of the 30S subunit, it bridges several disparate RNA helices of the 16S rRNA. Forms part of the Shine-Dalgarno cleft in the 70S ribosome. The chain is Small ribosomal subunit protein uS11 from Francisella tularensis subsp. holarctica (strain FTNF002-00 / FTA).